Reading from the N-terminus, the 437-residue chain is MGKECYYLSWILKFHLLLVLIQLVDSGSTIRFLPGFQGPLPFELETGYIGVGEAEKDQMFYYFIKSESNPEKDPLLLWLSGGPFCSSFTALIYENGPIAFKAEEYNGSIPSLVSTTYAWTKVASILYLDQPVGTGFSYSRNPLADIPSDTGVAKPVNEFLHKWLDKHPEFLSNPLYVAGNSYSGIVIPTIVQEISNGNHLDSKPQINLQGFVLGNPATDTDIDLNSRIPFAHGKALISDEHYESLKRSCQGNYISVNPRNTKCLKLLEDFKKCVSGISEEYILKPDCMWLYSCMANLHSLSEYWANEKSVRKALLVNEGTVRKWIRCNTEIAYNKDIRSSVPYHKYISIEGYRSLVFSGDHDMLVPFLGTQAWIRSLNYSIVDDWRPWMVQNQVAGYTRTYANKMTFATVKGGGHTSEYKPVETYIMIKRWLSGQPL.

An N-terminal signal peptide occupies residues 1 to 26 (MGKECYYLSWILKFHLLLVLIQLVDS). 3 disulfide bridges follow: Cys85/Cys327, Cys249/Cys263, and Cys287/Cys293. Asn106 is a glycosylation site (N-linked (GlcNAc...) asparagine). Residue Ser181 is part of the active site. Asp362 is a catalytic residue. Asn378 is a glycosylation site (N-linked (GlcNAc...) asparagine). His415 is an active-site residue.

The protein belongs to the peptidase S10 family. As to expression, expressed in seedlings and siliques.

Its subcellular location is the secreted. Probable carboxypeptidase. The chain is Serine carboxypeptidase-like 17 (SCPL17) from Arabidopsis thaliana (Mouse-ear cress).